A 744-amino-acid chain; its full sequence is Zinc finger protein 366 (744 aa).

Residues 206 to 228 (KQPPEPLLPRKAEPQESEETKQK) form a disordered region. Basic and acidic residues predominate over residues 213–228 (LPRKAEPQESEETKQK). 11 consecutive C2H2-type zinc fingers follow at residues 253–275 (WQCP…ILGH), 281–303 (HACT…MLTH), 309–331 (HKCQ…MMQH), 337–359 (HNCR…EAKH), 365–387 (NICV…LTTH), 393–415 (YNCS…MMKH), 421–443 (YICS…SLTH), 449–471 (HKCG…VLIH), 477–499 (YQCH…MIVH), 505–527 (FKCK…MHLH), and 533–556 (FKCL…KVKH). Residues 455–744 (GREFTLLANM…MEKQAVLLGI (290 aa)) form an interaction with NRIP1 region. The PXDLS signature appears at 590–594 (PFDLS). Disordered regions lie at residues 603 to 627 (VFQS…NCYE) and 664 to 692 (KEEK…QERD).

In terms of assembly, interacts with ESR1 and NRIP1. Interacts (via PXDLS motif) with CTBP1. Expressed in immature and mature dendritic cells (DCs). Not detected in other blood cell types.

The protein localises to the nucleus. Has transcriptional repression activity. Acts as a corepressor of ESR1; the function seems to involve CTBP1 and histone deacetylases. This Homo sapiens (Human) protein is Zinc finger protein 366.